The chain runs to 364 residues: Phospho-N-acetylmuramoyl-pentapeptide-transferase (364 aa).

A run of 10 helical transmembrane segments spans residues 18 to 38 (SLLI…AQIL), 48 to 68 (LFPL…VVPV), 91 to 111 (GTPT…ALIW), 114 to 134 (LDPA…IGWI), 154 to 174 (LILQ…TQSA), 183 to 203 (GQII…VLVA), 214 to 234 (VDGL…ALMA), 237 to 257 (NPGL…FIVH), 280 to 300 (AIGI…IFFV), and 343 to 363 (TQIV…AVIS).

This sequence belongs to the glycosyltransferase 4 family. MraY subfamily. Requires Mg(2+) as cofactor.

The protein resides in the cell inner membrane. It carries out the reaction UDP-N-acetyl-alpha-D-muramoyl-L-alanyl-gamma-D-glutamyl-meso-2,6-diaminopimeloyl-D-alanyl-D-alanine + di-trans,octa-cis-undecaprenyl phosphate = di-trans,octa-cis-undecaprenyl diphospho-N-acetyl-alpha-D-muramoyl-L-alanyl-D-glutamyl-meso-2,6-diaminopimeloyl-D-alanyl-D-alanine + UMP. It functions in the pathway cell wall biogenesis; peptidoglycan biosynthesis. Functionally, catalyzes the initial step of the lipid cycle reactions in the biosynthesis of the cell wall peptidoglycan: transfers peptidoglycan precursor phospho-MurNAc-pentapeptide from UDP-MurNAc-pentapeptide onto the lipid carrier undecaprenyl phosphate, yielding undecaprenyl-pyrophosphoryl-MurNAc-pentapeptide, known as lipid I. The protein is Phospho-N-acetylmuramoyl-pentapeptide-transferase of Rippkaea orientalis (strain PCC 8801 / RF-1) (Cyanothece sp. (strain PCC 8801)).